The following is a 308-amino-acid chain: Maspardin (308 aa).

The region spanning 87 to 159 (FCDGFRKLLD…NSFWLMPAFM (73 aa)) is the AB hydrolase-1 domain. Ser304 carries the phosphoserine modification.

This sequence belongs to the AB hydrolase superfamily. In terms of assembly, interacts with CD4. Interacts with ALDH16A1. Expressed in cell lines FT.1 and in a L cell fibroblast derivative (at protein level).

It is found in the cytoplasm. In terms of biological role, may play a role as a negative regulatory factor in CD4-dependent T-cell activation. The sequence is that of Maspardin (Spg21) from Mus musculus (Mouse).